We begin with the raw amino-acid sequence, 65 residues long: Large ribosomal subunit protein uL29 (65 aa).

Belongs to the universal ribosomal protein uL29 family.

This chain is Large ribosomal subunit protein uL29, found in Delftia acidovorans (strain DSM 14801 / SPH-1).